Consider the following 106-residue polypeptide: uncharacterized protein (106 aa).

The N-terminal stretch at 1–25 is a signal peptide; the sequence is MSVIKKNIPAIGLCICAFFIHSAVG.

To the N-terminal of the FimA/PapA family of fimbria proteins.

This is an uncharacterized protein from Salmonella typhi.